A 318-amino-acid polypeptide reads, in one-letter code: 2-keto-3-deoxygluconate permease (318 aa).

The next 10 membrane-spanning stretches (helical) occupy residues 10 to 30 (IPGG…TFTP), 42 to 62 (GLIT…GASI), 76 to 96 (VLVI…GTFL), 105 to 125 (LLAG…NGGL), 139 to 159 (AGAF…VILG), 162 to 182 (GIAT…LIGF), 199 to 219 (VQTL…LAVI), 224 to 244 (FAGI…LIIA), 263 to 283 (AGAA…FAPV), and 289 to 309 (ALVA…TALW).

This sequence belongs to the KdgT transporter family.

The protein resides in the cell inner membrane. The catalysed reaction is 2-dehydro-3-deoxy-D-gluconate(in) + H(+)(in) = 2-dehydro-3-deoxy-D-gluconate(out) + H(+)(out). Its function is as follows. Catalyzes the proton-dependent uptake of 2-keto-3-deoxygluconate (KDG) into the cell. The sequence is that of 2-keto-3-deoxygluconate permease from Pectobacterium carotovorum subsp. carotovorum (strain PC1).